Consider the following 375-residue polypeptide: Alanine racemase (375 aa).

K35 serves as the catalytic Proton acceptor; specific for D-alanine. N6-(pyridoxal phosphate)lysine is present on K35. R130 serves as a coordination point for substrate. Y253 (proton acceptor; specific for L-alanine) is an active-site residue. Substrate is bound at residue M305.

This sequence belongs to the alanine racemase family. The cofactor is pyridoxal 5'-phosphate.

It carries out the reaction L-alanine = D-alanine. It participates in amino-acid biosynthesis; D-alanine biosynthesis; D-alanine from L-alanine: step 1/1. Its function is as follows. Catalyzes the interconversion of L-alanine and D-alanine. May also act on other amino acids. In Ralstonia nicotianae (strain ATCC BAA-1114 / GMI1000) (Ralstonia solanacearum), this protein is Alanine racemase (alr).